The primary structure comprises 50 residues: Photosystem II reaction center protein M (50 aa).

Residues 7–27 traverse the membrane as a helical segment; it reads GFIISLLFVGIPTIFLVGLYI. The segment at 31 to 50 is disordered; it reads DGEKSSFFSDSSKGKLGPKS.

This sequence belongs to the PsbM family. In terms of assembly, PSII is composed of 1 copy each of membrane proteins PsbA, PsbB, PsbC, PsbD, PsbE, PsbF, PsbH, PsbI, PsbJ, PsbK, PsbL, PsbM, PsbT, PsbX, PsbY, Psb30/Ycf12, peripheral proteins PsbO, CyanoQ (PsbQ), PsbU, PsbV and a large number of cofactors. It forms dimeric complexes.

The protein resides in the cellular thylakoid membrane. In terms of biological role, one of the components of the core complex of photosystem II (PSII). PSII is a light-driven water:plastoquinone oxidoreductase that uses light energy to abstract electrons from H(2)O, generating O(2) and a proton gradient subsequently used for ATP formation. It consists of a core antenna complex that captures photons, and an electron transfer chain that converts photonic excitation into a charge separation. This subunit is found at the monomer-monomer interface. This chain is Photosystem II reaction center protein M, found in Prochlorococcus marinus (strain SARG / CCMP1375 / SS120).